Here is a 421-residue protein sequence, read N- to C-terminus: MDLENKVKKMGLGHEQGFGAPCLKCKEKCEGFELHFWRKICRNCKCGQEEHDVLLSNEEDRKVGKLFEDTKYTTLIAKLKSDGIPMYKRNVMILTNPVAAKKNVSINTVTYEWAPPVQNQALARQYMQMLPKEKQPVAGSEGAQYRKKQLAKQLPAHDQDPSKCHELSPREVKEMEQFVKKYKSEALGVGDVKLPCEMDAQGPKQMNIPGGDRSTPAAVGAMEDKSAEHKRTQYSCYCCKLSMKEGDPAIYAERAGYDKLWHPACFVCSTCHELLVDMIYFWKNEKLYCGRHYCDSEKPRCAGCDELIFSNEYTQAENQNWHLKHFCCFDCDSILAGEIYVMVNDKPVCKPCYVKNHAVVCQGCHNAIDPEVQRVTYNNFSWHASTECFLCSCCSKCLIGQKFMPVEGMVFCSVECKKRMS.

A PET domain is found at 92 to 199 (MILTNPVAAK…GDVKLPCEMD (108 aa)). Residues 133–164 (EKQPVAGSEGAQYRKKQLAKQLPAHDQDPSKC) are disordered. A compositionally biased stretch (basic and acidic residues) spans 155–164 (PAHDQDPSKC). LIM zinc-binding domains are found at residues 234 to 297 (YSCY…CDSE), 299 to 359 (PRCA…NHAV), and 362 to 421 (QGCH…KRMS).

The protein belongs to the prickle / espinas / testin family. As to quaternary structure, interacts via LIM domain 1 with ZYX. Interacts (via LIM domain 3) with ENAH and VASP. Interacts with ALKBH4, talin, actin, alpha-actinin, GRIP1 and PXN. Interacts (via LIM domain 2) with ACTL7A (via N-terminus). Heterodimer with ACTL7A; the heterodimer interacts with ENAH to form a heterotrimer.

It is found in the cytoplasm. The protein resides in the cell junction. The protein localises to the focal adhesion. In terms of biological role, scaffold protein that may play a role in cell adhesion, cell spreading and in the reorganization of the actin cytoskeleton. Plays a role in the regulation of cell proliferation. May act as a tumor suppressor. The sequence is that of Testin (TES) from Pan troglodytes (Chimpanzee).